A 214-amino-acid chain; its full sequence is Small ribosomal subunit protein uS5 (214 aa).

The S5 DRBM domain occupies 54–117; sequence LKYEVVDIKV…RDAKMNILPV (64 aa).

The protein belongs to the universal ribosomal protein uS5 family. As to quaternary structure, part of the 30S ribosomal subunit. Contacts protein S4.

With S4 and S12 plays an important role in translational accuracy. In Saccharolobus islandicus (strain Y.N.15.51 / Yellowstone #2) (Sulfolobus islandicus), this protein is Small ribosomal subunit protein uS5.